Here is a 212-residue protein sequence, read N- to C-terminus: Mediator of RNA polymerase II transcription subunit 20 (212 aa).

The protein belongs to the Mediator complex subunit 20 family. As to quaternary structure, component of the Mediator complex, which is composed of MED1, MED4, MED6, MED7, MED8, MED9, MED10, MED11, MED12, MED13, MED13L, MED14, MED15, MED16, MED17, MED18, MED19, MED20, MED21, MED22, MED23, MED24, MED25, MED26, MED27, MED29, MED30, MED31, CCNC, CDK8 and CDC2L6/CDK11. The MED12, MED13, CCNC and CDK8 subunits form a distinct module termed the CDK8 module. Mediator containing the CDK8 module is less active than Mediator lacking this module in supporting transcriptional activation. Individual preparations of the Mediator complex lacking one or more distinct subunits have been variously termed ARC, CRSP, DRIP, PC2, SMCC and TRAP. Interacts with PPARG.

The protein localises to the nucleus. Its function is as follows. Component of the Mediator complex, a coactivator involved in the regulated transcription of nearly all RNA polymerase II-dependent genes. Mediator functions as a bridge to convey information from gene-specific regulatory proteins to the basal RNA polymerase II transcription machinery. Mediator is recruited to promoters by direct interactions with regulatory proteins and serves as a scaffold for the assembly of a functional preinitiation complex with RNA polymerase II and the general transcription factors. The protein is Mediator of RNA polymerase II transcription subunit 20 (Med20) of Rattus norvegicus (Rat).